A 152-amino-acid polypeptide reads, in one-letter code: UPF0260 protein BAB1_1496 (152 aa).

The protein belongs to the UPF0260 family.

This is UPF0260 protein BAB1_1496 from Brucella abortus (strain 2308).